A 317-amino-acid polypeptide reads, in one-letter code: MLNEFIYPDKIFWEEKTDTYGRLVVEPLERGFGTTVGNSLRRVLLSSISGTAITAVKIYGIYHEFSAIEGVQEDAIELIANLKKIKFLMKGDSDVEILYLQKKGEGEVKASDIKTPPNVEILNPDQYIATITDPNKELNIEIRVERGRGYVPVEEMEAIGEVGWILVDADFSPVKKVGFRVDNVRVGKKSTYERLTLEIFTNGIKTPDQCMQEAIEILKKHYELLENIFTEKPTVPQKVAVDELAEKLSLSIEELDISQRALNSLKRIGITTIGDLVRMTEDELKSTKNIGRKALAEIKEALHKLGLELGMNIETQR.

The interval 1–229 (MLNEFIYPDK…KHYELLENIF (229 aa)) is alpha N-terminal domain (alpha-NTD). Residues 245-317 (AEKLSLSIEE…ELGMNIETQR (73 aa)) form an alpha C-terminal domain (alpha-CTD) region.

The protein belongs to the RNA polymerase alpha chain family. As to quaternary structure, homodimer. The RNAP catalytic core consists of 2 alpha, 1 beta, 1 beta' and 1 omega subunit. When a sigma factor is associated with the core the holoenzyme is formed, which can initiate transcription.

It catalyses the reaction RNA(n) + a ribonucleoside 5'-triphosphate = RNA(n+1) + diphosphate. DNA-dependent RNA polymerase catalyzes the transcription of DNA into RNA using the four ribonucleoside triphosphates as substrates. The protein is DNA-directed RNA polymerase subunit alpha of Aquifex aeolicus (strain VF5).